The chain runs to 228 residues: Auxin-responsive protein IAA14 (228 aa).

Positions 8–12 (LCLGL) match the EAR-like (transcriptional repression) motif. The region spanning 110–210 (VAFVKVSMDG…SCKRLRIMKG (101 aa)) is the PB1 domain.

Belongs to the Aux/IAA family. Homodimers and heterodimers. Interacts with TPL. In terms of tissue distribution, preferentially expressed in roots and flowers.

It localises to the nucleus. In terms of biological role, aux/IAA proteins are short-lived transcriptional factors that function as repressors of early auxin response genes at low auxin concentrations. Repression is thought to result from the interaction with auxin response factors (ARFs), proteins that bind to the auxin-responsive promoter element (AuxRE). Formation of heterodimers with ARF proteins may alter their ability to modulate early auxin response genes expression. The protein is Auxin-responsive protein IAA14 (IAA14) of Arabidopsis thaliana (Mouse-ear cress).